A 314-amino-acid polypeptide reads, in one-letter code: GTPase Era (314 aa).

The Era-type G domain occupies 7–188 (RCGFAAVIGS…REFIAGLMPE (182 aa)). The tract at residues 15–22 (GSPNAGKS) is G1. 15–22 (GSPNAGKS) is a binding site for GTP. Positions 41 to 45 (QTTRF) are G2. Positions 62–65 (DTPG) are G3. GTP contacts are provided by residues 62-66 (DTPGV) and 138-141 (NKVD). The segment at 138 to 141 (NKVD) is G4. Positions 167–169 (ISA) are G5. A KH type-2 domain is found at 219–296 (LHEELPYASM…HLFLNVKVDA (78 aa)).

The protein belongs to the TRAFAC class TrmE-Era-EngA-EngB-Septin-like GTPase superfamily. Era GTPase family. Monomer.

The protein localises to the cytoplasm. It localises to the cell inner membrane. In terms of biological role, an essential GTPase that binds both GDP and GTP, with rapid nucleotide exchange. Plays a role in 16S rRNA processing and 30S ribosomal subunit biogenesis and possibly also in cell cycle regulation and energy metabolism. The chain is GTPase Era from Maricaulis maris (strain MCS10) (Caulobacter maris).